We begin with the raw amino-acid sequence, 154 residues long: Myoglobin (154 aa).

In terms of domain architecture, Globin spans 2 to 148; it reads GLSDGEWTLV…FRNDMAAQYK (147 aa). A Phosphoserine modification is found at Ser-4. Nitrite is bound at residue His-65. His-65 serves as a coordination point for O2. Phosphothreonine is present on Thr-68. Heme b is bound at residue His-94.

This sequence belongs to the globin family. In terms of assembly, monomeric.

The protein localises to the cytoplasm. Its subcellular location is the sarcoplasm. It catalyses the reaction Fe(III)-heme b-[protein] + nitric oxide + H2O = Fe(II)-heme b-[protein] + nitrite + 2 H(+). The catalysed reaction is H2O2 + AH2 = A + 2 H2O. Functionally, monomeric heme protein which primary function is to store oxygen and facilitate its diffusion within muscle tissues. Reversibly binds oxygen through a pentacoordinated heme iron and enables its timely and efficient release as needed during periods of heightened demand. Depending on the oxidative conditions of tissues and cells, and in addition to its ability to bind oxygen, it also has a nitrite reductase activity whereby it regulates the production of bioactive nitric oxide. Under stress conditions, like hypoxia and anoxia, it also protects cells against reactive oxygen species thanks to its pseudoperoxidase activity. This Capra hircus (Goat) protein is Myoglobin.